A 73-amino-acid polypeptide reads, in one-letter code: Neurogranin (73 aa).

An IQ domain is found at 26 to 55 (ANAAAAKIQASFRGHMTRKKIKGGEIDRKT). Phosphoserine; by PKC is present on serine 36. The span at 47 to 59 (KGGEIDRKTKDAE) shows a compositional bias: basic and acidic residues. A disordered region spans residues 47–73 (KGGEIDRKTKDAECANSTRGGDLRNGD).

It belongs to the neurogranin family.

Functionally, acts as a 'third messenger' substrate of protein kinase C-mediated molecular cascades during synaptic development and remodeling. Binds to calmodulin in the absence of calcium. The sequence is that of Neurogranin (NRGN) from Serinus canaria (Island canary).